Here is an 895-residue protein sequence, read N- to C-terminus: Procollagen lysyl hydroxylase and glycosyltransferase (895 aa).

The segment at 1-194 (MISRTYVINL…PSDEFIPIMH (194 aa)) is lysyl hydroxylase region. A glucosyl transferase region region spans residues 537–895 (YYFYISGDCI…KRYILVSFVN (359 aa)). One can recognise a Fe2OG dioxygenase domain in the interval 805–895 (DINLAFVVKY…KRYILVSFVN (91 aa)). Fe cation is bound by residues His-825, Asp-827, and His-877. Arg-887 is a catalytic residue.

The cofactor is Fe cation. It depends on L-ascorbate as a cofactor.

The catalysed reaction is L-lysyl-[collagen] + 2-oxoglutarate + O2 = (5R)-5-hydroxy-L-lysyl-[collagen] + succinate + CO2. Its function is as follows. Displays two enzymatic activities involved in procollagen processing. Forms hydroxylysine residues in -Xaa-Lys-Gly- sequences in collagens. These hydroxylysines are subsequentially glucosylated by a glucosyltransferase activity. Collagen post-translationally modified is detected in mimivirus virion. This chain is Procollagen lysyl hydroxylase and glycosyltransferase, found in Acanthamoeba polyphaga (Amoeba).